The primary structure comprises 139 residues: Nucleoside diphosphate kinase (139 aa).

Positions 10, 58, 86, 92, 103, and 113 each coordinate ATP. The active-site Pros-phosphohistidine intermediate is His-116.

The protein belongs to the NDK family. As to quaternary structure, homotetramer. It depends on Mg(2+) as a cofactor.

It localises to the cytoplasm. The enzyme catalyses a 2'-deoxyribonucleoside 5'-diphosphate + ATP = a 2'-deoxyribonucleoside 5'-triphosphate + ADP. It carries out the reaction a ribonucleoside 5'-diphosphate + ATP = a ribonucleoside 5'-triphosphate + ADP. Its function is as follows. Major role in the synthesis of nucleoside triphosphates other than ATP. The ATP gamma phosphate is transferred to the NDP beta phosphate via a ping-pong mechanism, using a phosphorylated active-site intermediate. This Nitratidesulfovibrio vulgaris (strain ATCC 29579 / DSM 644 / CCUG 34227 / NCIMB 8303 / VKM B-1760 / Hildenborough) (Desulfovibrio vulgaris) protein is Nucleoside diphosphate kinase.